Consider the following 224-residue polypeptide: MNRSTRSHKAIVIFSGGQDSTTCLFQAIQEFKRENVEVITFQYGQRHSIELEKAAWIAQNLGIKQTVIDTSVIKAITTNALITEATIKQDGDKPNTFVDGRNALFLLYTAIYAKGQGIQTIFTGVCETDFSGYPDCRDIFIKSMNVTLNLAMDYNFNIRTPLMYLTKKQTWALADQLGAFEYVREHTHTCYLGVEGGCHTCPSCLLREKGLNEYLAEKSGEKNV.

14-24 (FSGGQDSTTCL) lines the ATP pocket. Zn(2+) is bound by residues Cys-190, Cys-198, Cys-201, and Cys-204.

Belongs to the QueC family. Zn(2+) is required as a cofactor.

The enzyme catalyses 7-carboxy-7-deazaguanine + NH4(+) + ATP = 7-cyano-7-deazaguanine + ADP + phosphate + H2O + H(+). It functions in the pathway purine metabolism; 7-cyano-7-deazaguanine biosynthesis. Its function is as follows. Catalyzes the ATP-dependent conversion of 7-carboxy-7-deazaguanine (CDG) to 7-cyano-7-deazaguanine (preQ(0)). The polypeptide is 7-cyano-7-deazaguanine synthase (Haemophilus ducreyi (strain 35000HP / ATCC 700724)).